The chain runs to 547 residues: Chaperonin GroEL (547 aa).

ATP contacts are provided by residues 30-33 (TLGP), K51, 87-91 (DGTTT), G415, and D495.

Belongs to the chaperonin (HSP60) family. In terms of assembly, forms a cylinder of 14 subunits composed of two heptameric rings stacked back-to-back. Interacts with the co-chaperonin GroES.

The protein localises to the cytoplasm. It carries out the reaction ATP + H2O + a folded polypeptide = ADP + phosphate + an unfolded polypeptide.. Its function is as follows. Together with its co-chaperonin GroES, plays an essential role in assisting protein folding. The GroEL-GroES system forms a nano-cage that allows encapsulation of the non-native substrate proteins and provides a physical environment optimized to promote and accelerate protein folding. The chain is Chaperonin GroEL from Aggregatibacter actinomycetemcomitans (Actinobacillus actinomycetemcomitans).